The sequence spans 105 residues: Small ribosomal subunit protein uS10 (105 aa).

The protein belongs to the universal ribosomal protein uS10 family. As to quaternary structure, part of the 30S ribosomal subunit.

In terms of biological role, involved in the binding of tRNA to the ribosomes. The protein is Small ribosomal subunit protein uS10 of Synechococcus elongatus (strain ATCC 33912 / PCC 7942 / FACHB-805) (Anacystis nidulans R2).